Consider the following 372-residue polypeptide: NAD(P)H-quinone oxidoreductase subunit 1 (372 aa).

The next 8 helical transmembrane spans lie at 27-47, 97-117, 128-148, 166-186, 204-224, 254-274, 308-328, and 351-371; these read AVWM…GVLI, ALFT…YLIV, LGIG…GLLM, AAQS…IAMM, ILGW…IAAL, FALF…MVAI, AVGI…AILL, and VGLV…IAFG.

This sequence belongs to the complex I subunit 1 family. NDH-1 is composed of at least 11 different subunits.

It is found in the cellular thylakoid membrane. The enzyme catalyses a plastoquinone + NADH + (n+1) H(+)(in) = a plastoquinol + NAD(+) + n H(+)(out). It carries out the reaction a plastoquinone + NADPH + (n+1) H(+)(in) = a plastoquinol + NADP(+) + n H(+)(out). Its function is as follows. NDH-1 shuttles electrons from an unknown electron donor, via FMN and iron-sulfur (Fe-S) centers, to quinones in the respiratory and/or the photosynthetic chain. The immediate electron acceptor for the enzyme in this species is believed to be plastoquinone. Couples the redox reaction to proton translocation, and thus conserves the redox energy in a proton gradient. This chain is NAD(P)H-quinone oxidoreductase subunit 1, found in Cyanothece sp. (strain PCC 7425 / ATCC 29141).